Here is a 23-residue protein sequence, read N- to C-terminus: U1-poneritoxin-Da3b (23 aa).

The protein belongs to the non-disulfide-bridged peptide (NDBP) superfamily. Medium-length antimicrobial peptide (group 3) family. Ponericin-W subfamily. Expressed by the venom gland.

The protein resides in the secreted. It localises to the target cell membrane. In terms of biological role, may have antimicrobial properties, like most ant linear peptides. May act by disrupting the integrity of the bacterial cell membrane. This chain is U1-poneritoxin-Da3b, found in Dinoponera australis (Giant neotropical hunting ant).